Reading from the N-terminus, the 1281-residue chain is Dynactin subunit 1 (1281 aa).

A disordered region spans residues 1–26; it reads MAQSRRHMSSRTPSGSRMSTEASARP. A compositionally biased stretch (polar residues) spans 10 to 22; the sequence is SRTPSGSRMSTEA. Positions 48–90 constitute a CAP-Gly domain; sequence GATLFATGKWVGVILDEAKGKNDGTVQGRKYFTCDEGHGIFVR. The segment at 100-221 is disordered; it reads GADTTSPETP…SPSKEEEGLR (122 aa). The span at 102 to 114 shows a compositional bias: polar residues; that stretch reads DTTSPETPDSSAS. Residues threonine 108, threonine 145, threonine 146, and threonine 147 each carry the phosphothreonine modification. Residues 129–152 are compositionally biased toward basic residues; it reads SKLRGLKPKKAPTARKTTTRRPKP. Positions 161-205 are enriched in low complexity; it reads AGPSSSLGPSGSASAGELSSSEPSTPAQTPLAAPIIPTPALTSPG. Serine 179 bears the Phosphoserine; by PLK1 mark. Phosphoserine; by CDK1 is present on serine 212. 3 coiled-coil regions span residues 214–547, 943–1049, and 1185–1214; these read SKEE…RQQQ, LKLE…EGLR, and SAQLMEQVAQLKSLSDTIEKLKDEVLKETV. Positions 911-1281 are interaction with HPS6; sequence EYDAERPPSK…LHQLHSRLIS (371 aa).

This sequence belongs to the dynactin 150 kDa subunit family. As to quaternary structure, monomer and homodimer. Subunit of dynactin, a multiprotein complex part of a tripartite complex with dynein and a adapter, such as BICDL1, BICD2 or HOOK3. The dynactin complex is built around ACTR1A/ACTB filament and consists of an actin-related filament composed of a shoulder domain, a pointed end and a barbed end. Its length is defined by its flexible shoulder domain. The soulder is composed of 2 DCTN1 subunits, 4 DCTN2 and 2 DCTN3. DCTN1/p150(glued) binds directly to microtubules and to cytoplasmic dynein. The 4 DCNT2 (via N-terminus) bind the ACTR1A filament and act as molecular rulers to determine the length. The pointed end is important for binding dynein-dynactin cargo adapters. Consists of 4 subunits: ACTR10, DCNT4, DCTN5 and DCTN6. The barbed end is composed of a CAPZA1:CAPZB heterodimers, which binds ACTR1A/ACTB filament and dynactin and stabilizes dynactin. Interacts with the C-terminus of MAPRE1, MAPRE2 and MAPRE3. Interacts with FBXL5. Interacts with ECPAS. Interacts with CLIP1. Interacts with CLN3 and DYNAP. Interacts with MISP; this interaction regulates its distribution at the cell cortex. Interacts with CEP131. Interacts with CEP126. Interacts with dynein intermediate chain and dynein heavy chain. Interacts with PLK1 (via POLO-box domain). Interacts with TBCB and PARD6A. Binds preferentially to tyrosinated microtubules than to detyrosinated microtubules. Interacts with KIF3A. Interacts with HPS6. Interacts with SNX6. Interacts with BICD2. Interacts with DST (isoform 1). Identified in a complex with MREG and RILP. Interacts with BCCIP. Interacts with DCDC1. Interacts with AKNA. Interacts with DYNC1I2. Interacts with RUFY3 and RUFY4. Post-translationally, ubiquitinated by a SCF complex containing FBXL5, leading to its degradation by the proteasome. In terms of processing, phosphorylation by SLK at Thr-145, Thr-146 and Thr-147 targets DCTN1 to the centrosome. It is uncertain if SLK phosphorylates all three threonines or one or two of them. PLK1-mediated phosphorylation at Ser-179 is essential for its localization in the nuclear envelope and promotes its dissociation from microtubules during early mitosis and positively regulates nuclear envelope breakdown during prophase.

The protein localises to the cytoplasm. It is found in the cytoskeleton. The protein resides in the microtubule organizing center. Its subcellular location is the centrosome. It localises to the centriole. The protein localises to the spindle. It is found in the nucleus envelope. The protein resides in the cell cortex. Its function is as follows. Part of the dynactin complex that activates the molecular motor dynein for ultra-processive transport along microtubules. Plays a key role in dynein-mediated retrograde transport of vesicles and organelles along microtubules by recruiting and tethering dynein to microtubules. Binds to both dynein and microtubules providing a link between specific cargos, microtubules and dynein. Essential for targeting dynein to microtubule plus ends, recruiting dynein to membranous cargos and enhancing dynein processivity (the ability to move along a microtubule for a long distance without falling off the track). Can also act as a brake to slow the dynein motor during motility along the microtubule. Can regulate microtubule stability by promoting microtubule formation, nucleation and polymerization and by inhibiting microtubule catastrophe in neurons. Inhibits microtubule catastrophe by binding both to microtubules and to tubulin, leading to enhanced microtubule stability along the axon. Plays a role in metaphase spindle orientation. Plays a role in centriole cohesion and subdistal appendage organization and function. Its recruitment to the centriole in a KIF3A-dependent manner is essential for the maintenance of centriole cohesion and the formation of subdistal appendage. Also required for microtubule anchoring at the mother centriole. Plays a role in primary cilia formation. The polypeptide is Dynactin subunit 1 (Dctn1) (Mus musculus (Mouse)).